The sequence spans 735 residues: Catalase-peroxidase (735 aa).

Residues 1–25 form a disordered region; that stretch reads MSDSKCPVTGKSSRQVAGGGTSNRD. Positions 95 to 223 form a cross-link, tryptophyl-tyrosyl-methioninium (Trp-Tyr) (with M-249); it reads WHSAGTYRMG…LAAVQMGLIY (129 aa). The Proton acceptor role is filled by histidine 96. A cross-link (tryptophyl-tyrosyl-methioninium (Tyr-Met) (with W-95)) is located at residues 223 to 249; that stretch reads YINPEGPDGNPDPVASGRDVRETFARM. Histidine 264 provides a ligand contact to heme b.

It belongs to the peroxidase family. Peroxidase/catalase subfamily. Homodimer or homotetramer. Heme b is required as a cofactor. Formation of the three residue Trp-Tyr-Met cross-link is important for the catalase, but not the peroxidase activity of the enzyme.

The catalysed reaction is H2O2 + AH2 = A + 2 H2O. It carries out the reaction 2 H2O2 = O2 + 2 H2O. In terms of biological role, bifunctional enzyme with both catalase and broad-spectrum peroxidase activity. The sequence is that of Catalase-peroxidase from Trichlorobacter lovleyi (strain ATCC BAA-1151 / DSM 17278 / SZ) (Geobacter lovleyi).